The following is a 37-amino-acid chain: MKVRPSVKKICEKCKVIKRHGKVMVICENPKHKQRQG.

This sequence belongs to the bacterial ribosomal protein bL36 family.

The polypeptide is Large ribosomal subunit protein bL36 (Desulfitobacterium hafniense (strain Y51)).